We begin with the raw amino-acid sequence, 432 residues long: GTPase Obg (432 aa).

Residues 1 to 158 (MFVDQVKIYV…RNIILELKLL (158 aa)) form the Obg domain. Positions 159–329 (ADVGLVGFPS…LLFAIADLLE (171 aa)) constitute an OBG-type G domain. GTP contacts are provided by residues 165 to 172 (GFPSVGKS), 190 to 194 (FTTLV), 212 to 215 (DLPG), 282 to 285 (NKMD), and 310 to 312 (SAA). 2 residues coordinate Mg(2+): Ser-172 and Thr-192. The OCT domain occupies 350 to 428 (KYEKEEPPFT…LLDYEFEFVD (79 aa)).

Belongs to the TRAFAC class OBG-HflX-like GTPase superfamily. OBG GTPase family. As to quaternary structure, monomer. Mg(2+) serves as cofactor.

Its subcellular location is the cytoplasm. An essential GTPase which binds GTP, GDP and possibly (p)ppGpp with moderate affinity, with high nucleotide exchange rates and a fairly low GTP hydrolysis rate. Plays a role in control of the cell cycle, stress response, ribosome biogenesis and in those bacteria that undergo differentiation, in morphogenesis control. This Geobacillus kaustophilus (strain HTA426) protein is GTPase Obg.